A 158-amino-acid chain; its full sequence is RNA pyrophosphohydrolase (158 aa).

A Nudix hydrolase domain is found at 6–150; the sequence is GYRLNVGIVL…KRDVYRKVMQ (145 aa). Positions 39–60 match the Nudix box motif; it reads GGINIGETPEQAMYRELFEEIG.

This sequence belongs to the Nudix hydrolase family. RppH subfamily. Requires a divalent metal cation as cofactor.

Functionally, accelerates the degradation of transcripts by removing pyrophosphate from the 5'-end of triphosphorylated RNA, leading to a more labile monophosphorylated state that can stimulate subsequent ribonuclease cleavage. In Blochmanniella pennsylvanica (strain BPEN), this protein is RNA pyrophosphohydrolase.